Consider the following 172-residue polypeptide: 3-hydroxydecanoyl-[acyl-carrier-protein] dehydratase (172 aa).

The active site involves histidine 71.

The protein belongs to the thioester dehydratase family. FabA subfamily. Homodimer.

It localises to the cytoplasm. It carries out the reaction a (3R)-hydroxyacyl-[ACP] = a (2E)-enoyl-[ACP] + H2O. The catalysed reaction is (3R)-hydroxydecanoyl-[ACP] = (2E)-decenoyl-[ACP] + H2O. The enzyme catalyses (2E)-decenoyl-[ACP] = (3Z)-decenoyl-[ACP]. Its pathway is lipid metabolism; fatty acid biosynthesis. Its function is as follows. Necessary for the introduction of cis unsaturation into fatty acids. Catalyzes the dehydration of (3R)-3-hydroxydecanoyl-ACP to E-(2)-decenoyl-ACP and then its isomerization to Z-(3)-decenoyl-ACP. Can catalyze the dehydratase reaction for beta-hydroxyacyl-ACPs with saturated chain lengths up to 16:0, being most active on intermediate chain length. The chain is 3-hydroxydecanoyl-[acyl-carrier-protein] dehydratase from Brucella ovis (strain ATCC 25840 / 63/290 / NCTC 10512).